A 1673-amino-acid polypeptide reads, in one-letter code: Protein-methionine sulfoxide oxidase mical3b (1673 aa).

Residues 2–492 form a monooxygenase domain region; it reads WDGQSEMCQA…RHLIDTGEGP (491 aa). FAD-binding positions include Cys-96, 96–124, Glu-115, Arg-117, Arg-122, Asn-124, and Asp-396; that span reads CGLR…SRNN. Residues 512 to 618 form the Calponin-homology (CH) domain; the sequence is MARYSKLLSW…YLSQLHELLK (107 aa). The interval 647–714 is disordered; the sequence is SKLGQSLSRK…PKASEGHSKV (68 aa). Residues 661 to 671 show a composition bias toward basic and acidic residues; it reads DKKEKEADSVG. An LIM zinc-binding domain is found at 791–853; sequence DVCYFCGRRV…KHHFSFRLAS (63 aa). Residues 882-892 are compositionally biased toward low complexity; it reads LSSLGSVGTAT. 5 disordered regions span residues 882–901, 918–938, 951–1100, 1159–1188, and 1357–1393; these read LSSL…SSTH, RIEL…LQEV, SLQE…KRSE, QSAR…TDGD, and GPDA…RETG. Residues 973 to 992 are compositionally biased toward basic and acidic residues; the sequence is LVWKKGEELHARTNGERKLD. Acidic residues-rich tracts occupy residues 993 to 1002 and 1010 to 1041; these read LEEELKEEEG and EGEE…DPDI. Positions 1081–1094 are enriched in low complexity; the sequence is SDLTPDPSTTPESS. The segment covering 1159–1182 has biased composition (polar residues); the sequence is QSARICDSSTQTHSVTDLQETSPL. 2 coiled-coil regions span residues 1475–1531 and 1573–1638; these read EEEL…AVEK and QEKN…VEQR. Positions 1495–1661 constitute a bMERB domain; it reads KQEELRRLHR…EKEEDSDLEA (167 aa).

The protein belongs to the Mical family. The cofactor is FAD.

Its subcellular location is the cytoplasm. The protein localises to the cytoskeleton. It localises to the nucleus. It carries out the reaction L-methionyl-[F-actin] + NADPH + O2 + H(+) = L-methionyl-(R)-S-oxide-[F-actin] + NADP(+) + H2O. In terms of biological role, monooxygenase that promotes depolymerization of F-actin by mediating oxidation of specific methionine residues on actin. Acts by modifying actin subunits through the addition of oxygen to form methionine-sulfoxide, leading to promote actin filament severing and prevent repolymerization. Involved in exocytic vesicles tethering and fusion: the monooxygenase activity is required for this process. This Danio rerio (Zebrafish) protein is Protein-methionine sulfoxide oxidase mical3b (mical3b).